The sequence spans 354 residues: Uroporphyrinogen decarboxylase (354 aa).

Residues 27–31 (RQAGR), Asp-77, Tyr-154, Thr-209, and His-327 each bind substrate.

This sequence belongs to the uroporphyrinogen decarboxylase family. As to quaternary structure, homodimer.

The protein localises to the cytoplasm. The enzyme catalyses uroporphyrinogen III + 4 H(+) = coproporphyrinogen III + 4 CO2. The protein operates within porphyrin-containing compound metabolism; protoporphyrin-IX biosynthesis; coproporphyrinogen-III from 5-aminolevulinate: step 4/4. Functionally, catalyzes the decarboxylation of four acetate groups of uroporphyrinogen-III to yield coproporphyrinogen-III. This is Uroporphyrinogen decarboxylase from Escherichia coli (strain UTI89 / UPEC).